The primary structure comprises 128 residues: Large ribosomal subunit protein bL17 (128 aa).

This sequence belongs to the bacterial ribosomal protein bL17 family. As to quaternary structure, part of the 50S ribosomal subunit. Contacts protein L32.

The polypeptide is Large ribosomal subunit protein bL17 (Vibrio cholerae serotype O1 (strain ATCC 39541 / Classical Ogawa 395 / O395)).